The following is a 231-amino-acid chain: uncharacterized protein (231 aa).

The signal sequence occupies residues Met1–Ala19. The N-palmitoyl cysteine moiety is linked to residue Cys20. The S-diacylglycerol cysteine moiety is linked to residue Cys20.

This sequence belongs to the MG439/MG440 family.

The protein localises to the cell membrane. This is an uncharacterized protein from Mycoplasma pneumoniae (strain ATCC 29342 / M129 / Subtype 1) (Mycoplasmoides pneumoniae).